Consider the following 657-residue polypeptide: Tyramine beta-hydroxylase (657 aa).

Residues 77–97 (VALLFLLVAYCGGVVHAGEIV) traverse the membrane as a helical segment. The DOMON domain maps to 103–214 (TNVTVKWHTD…GTTQFYIAAS (112 aa)). Residues Asn104 and Asn143 are each glycosylated (N-linked (GlcNAc...) asparagine). Tyr278 is a catalytic residue. 2 disulfide bridges follow: Cys280–Cys330 and Cys319–Cys342. Cu(2+)-binding residues include His312 and His313. The Cu(2+) site is built by His380, His458, His460, and Met533. Disulfide bonds link Cys437-Cys549, Cys441-Cys606, and Cys512-Cys534. Residue His458 is part of the active site. The N-linked (GlcNAc...) asparagine glycan is linked to Asn555.

Belongs to the copper type II ascorbate-dependent monooxygenase family. It depends on Cu(2+) as a cofactor. In terms of tissue distribution, present in synaptic regions of RIC interneurons. Present in gonadal sheath cells of hermaphrodites (at protein level).

The protein resides in the membrane. It carries out the reaction tyramine + L-ascorbate + O2 = (R)-octopamine + L-dehydroascorbate + H2O. Functionally, required for the conversion of tyramine to octopamine, a precursor of octapamine but probably itself a neurotransmitter. Involved in the regulation of egg laying, which is inhibited by tyramine. Due to its involvement in octopamine biosynthesis, also required for crtc-1-dependent regulation of AMPK-mediated longevity. The sequence is that of Tyramine beta-hydroxylase from Caenorhabditis elegans.